The sequence spans 146 residues: Large ribosomal subunit protein uL15 (146 aa).

The interval methionine 1–arginine 64 is disordered. The span at threonine 30 to lysine 39 shows a compositional bias: basic residues.

Belongs to the universal ribosomal protein uL15 family. In terms of assembly, part of the 50S ribosomal subunit.

Functionally, binds to the 23S rRNA. The polypeptide is Large ribosomal subunit protein uL15 (Geotalea daltonii (strain DSM 22248 / JCM 15807 / FRC-32) (Geobacter daltonii)).